Reading from the N-terminus, the 406-residue chain is Collagen and calcium-binding EGF domain-containing protein 1 (406 aa).

The N-terminal stretch at M1–T34 is a signal peptide. One can recognise an EGF-like; calcium-binding domain in the interval D134 to T175. Disulfide bonds link C138/C150, C146/C159, and C161/C174. N142 carries an N-linked (GlcNAc...) asparagine glycan. The N-linked (GlcNAc...) asparagine glycan is linked to N182. Disordered stretches follow at residues Y244–F335 and R360–P406. Collagen-like domains are found at residues L245–P290 and G300–G333. Over residues P270–P279 the composition is skewed to pro residues. The segment covering P281–P292 has biased composition (low complexity). The O-linked (Xyl...) (chondroitin sulfate) serine glycan is linked to S385. A compositionally biased stretch (basic and acidic residues) spans G386 to P406.

Belongs to the CCBE1 family. In terms of tissue distribution, detected in fibroblasts and urine (at protein level). Not expressed in blood or lymphatic endothelial cells.

It localises to the secreted. Its function is as follows. Required for lymphangioblast budding and angiogenic sprouting from venous endothelium during embryogenesis. This chain is Collagen and calcium-binding EGF domain-containing protein 1 (CCBE1), found in Homo sapiens (Human).